A 312-amino-acid polypeptide reads, in one-letter code: Ubiquinone biosynthesis protein COQ9, mitochondrial (312 aa).

The transit peptide at 1–45 (MAATAAVSGVLRRLGWRLLQLRCLPVARCQSPLMPRAFHTAVGFR) directs the protein to the mitochondrion. Residues 17–32 (RLLQLRCLPVARCQSP) carry the SIFI-degron motif. The interval 43–92 (GFRSSEEQRQQPPHSSQQHSETQGPEFSRPPPRYTDQSGEEEEDYESEEQ) is disordered. The segment covering 52-63 (QQPPHSSQQHSE) has biased composition (low complexity). Serine 80 bears the Phosphoserine mark. The segment covering 80-91 (SGEEEEDYESEE) has biased composition (acidic residues). Lysine 169 bears the N6-acetyllysine mark. Arginine 238 is a binding site for a 1,2-diacylglycero-3-phosphoethanolamine.

This sequence belongs to the COQ9 family. Homodimer. Heterodimer; two heterodimers of COQ7:COQ9 come together on the same side of the lipid pseudo-bilayer and form a curved tetramer with a hydrophobic surface suitable for membrane interaction. These two tetramers assemble into a soluble octamer with a pseudo-bilayer of lipids captured within. Interacts with COQ7; this interaction allows ubiquinone (CoQ) isoprene intermediates presentation to COQ7 and facilitates the COQ7-mediated hydroxylase step. In terms of processing, in response to mitochondrial stress, the precursor protein is ubiquitinated by the SIFI complex in the cytoplasm before mitochondrial import, leading to its degradation. Within the SIFI complex, UBR4 initiates ubiquitin chain that are further elongated or branched by KCMF1.

Its subcellular location is the mitochondrion. It functions in the pathway cofactor biosynthesis; ubiquinone biosynthesis. Its function is as follows. Membrane-associated protein that warps the membrane surface to access and bind aromatic isoprenes with high specificity, including ubiquinone (CoQ) isoprene intermediates and presents them directly to COQ7, therefore facilitating the COQ7-mediated hydroxylase step. Participates in the biosynthesis of coenzyme Q, also named ubiquinone, an essential lipid-soluble electron transporter for aerobic cellular respiration. The polypeptide is Ubiquinone biosynthesis protein COQ9, mitochondrial (Rattus norvegicus (Rat)).